The chain runs to 350 residues: uncharacterized protein (350 aa).

Positions 197-212 (KNDNSEDNRSEDDLKS) are enriched in basic and acidic residues. A disordered region spans residues 197–217 (KNDNSEDNRSEDDLKSSQDPV).

Its subcellular location is the plastid. It is found in the chloroplast. This is an uncharacterized protein from Euglena gracilis.